The chain runs to 413 residues: Serine hydroxymethyltransferase (413 aa).

(6S)-5,6,7,8-tetrahydrofolate-binding positions include leucine 119 and 123-125 (GHL). The residue at position 228 (lysine 228) is an N6-(pyridoxal phosphate)lysine. Residue 351–353 (SPF) coordinates (6S)-5,6,7,8-tetrahydrofolate.

This sequence belongs to the SHMT family. In terms of assembly, homodimer. It depends on pyridoxal 5'-phosphate as a cofactor.

It is found in the cytoplasm. The catalysed reaction is (6R)-5,10-methylene-5,6,7,8-tetrahydrofolate + glycine + H2O = (6S)-5,6,7,8-tetrahydrofolate + L-serine. The protein operates within one-carbon metabolism; tetrahydrofolate interconversion. Its pathway is amino-acid biosynthesis; glycine biosynthesis; glycine from L-serine: step 1/1. Catalyzes the reversible interconversion of serine and glycine with tetrahydrofolate (THF) serving as the one-carbon carrier. This reaction serves as the major source of one-carbon groups required for the biosynthesis of purines, thymidylate, methionine, and other important biomolecules. Also exhibits THF-independent aldolase activity toward beta-hydroxyamino acids, producing glycine and aldehydes, via a retro-aldol mechanism. In Clostridium botulinum (strain Langeland / NCTC 10281 / Type F), this protein is Serine hydroxymethyltransferase.